A 436-amino-acid chain; its full sequence is UPF0597 protein YhaM (436 aa).

The protein belongs to the UPF0597 family.

The sequence is that of UPF0597 protein YhaM from Escherichia coli (strain 55989 / EAEC).